Here is a 597-residue protein sequence, read N- to C-terminus: MRTTLTGTASVLDTTLTRLIDDVIENGSSFLADDENLQHYKQHLSHLETASKIALLRECLCVRPPLPLLPEDLLQNVDSILTRVRQHKILTPIFSLSPSRLIKHGDLGATRIHLWRGDITTLTGVTAITNAANSQGLGCFQPTHRCIDNIIHAEAGPRLREECFQRMQARGKELEPGEVLVTEGHALFASSVMHTVGPQLKRGASPTETERRQLAKCYESILEALELLPSDEDGSKSIALCCISTGLFAFPADEAAEIAVSTVTSWLQKHPSTTITDVIFNTFTQSDTEFYSKLLGPSHTKSISPVENTPQGSLSLAREWLSSADAVLVTAGAGLSAAEGLDYHSRDLFKRNFPGCLKFGLTSLYSVFGFNDWPSEEHRWGYFFTHLNMVANWSNTPTYQILIPWLRNFGQDAFVRTSNADGLFLANGWPKEQLSTPQGSYGYLQCLNNCRVDAVVPSAPLVADAMPHIDKATQKLMDPSKIPLCRFCGSKMSICVRAGSWFNQAPYQEGEAQWKAWKSRVLREKKNLVILELGVGMNTPGVLRWPNEDLVMRSDGRVKLIRVGMGPEAMVPWEQEDEGLSTCVQGDIGRAIPLLLE.

One can recognise a Macro domain in the interval 99–299 (SRLIKHGDLG…FYSKLLGPSH (201 aa)). ADP-D-ribose is bound by residues Asp-118, Ile-119, and Asn-133. Zn(2+) contacts are provided by Cys-139, His-144, and Cys-146. 7 residues coordinate ADP-D-ribose: Cys-146, Ile-147, Asp-148, Ser-244, Thr-245, Gly-246, and Phe-248. A Deacetylase sirtuin-type domain is found at 307–597 (ENTPQGSLSL…IGRAIPLLLE (291 aa)). Residues Ala-333, 418 to 421 (SNAD), and Gln-438 contribute to the NAD(+) site. 4 residues coordinate Zn(2+): Cys-446, Cys-450, Cys-485, and Cys-488. Val-584 is an NAD(+) binding site.

This sequence in the N-terminal section; belongs to the MacroD-type family. Zn-Macro subfamily. In the C-terminal section; belongs to the sirtuin family. Class M subfamily. As to quaternary structure, monomer. The cofactor is Zn(2+).

It carries out the reaction 5-O-(ADP-D-ribosyl)-L-glutamyl-[protein] + H2O = L-glutamyl-[protein] + ADP-D-ribose + H(+). Functionally, is probably a bifunctional enzyme with ADP-ribosyltransferase and ADP-ribosylhydrolase activities. In vitro, can act as an ADP-ribosylhydrolase that hydrolyzes ADP-ribosyl-glutamate bonds. It can remove the ADP-ribosyl modification from the human mono-ADP-ribosylated PARP1 E988Q mutant, which is primarily modified on glutamate site with only minor aspartate contribution. It cannot hydrolyze the ADP-ribosyl-arpartate bond in ribosylated S.pyogenes GcvH-L. The protein is Probable bifunctional ADP-ribose hydrolase/ADP-ribosyltransferase of Fusarium oxysporum f. sp. cubense.